The primary structure comprises 233 residues: Probable fimbrial chaperone protein ElfD (233 aa).

The signal sequence occupies residues 1 to 26; it reads MKTCITKGIVTVSLTAILLSCSSAWA.

This sequence belongs to the periplasmic pilus chaperone family.

The protein localises to the periplasm. In terms of biological role, part of the elfADCG-ycbUVF fimbrial operon, which promotes adhesion of bacteria to different abiotic surfaces. Could be required for the biogenesis of the ElfA fimbriae. The protein is Probable fimbrial chaperone protein ElfD (elfD) of Escherichia coli (strain K12).